The following is a 344-amino-acid chain: MDENKKRALSAALSQIEKQFGKGSVMRMGDRVIEAVEVIPTGSLMLDIALGIGGLPKGRVVEIYGPESSGKTTLTLQAIAECQKNGGTAAFIDAEHALDPIYAAKLGVNVDDLLLSQPDTGEQALEIADMLVRSGSVDIVVVDSVAALTPKAEIEGEMGDQLPGLQARLMSQALRKLTGNIKRSNTLVVFINQLRMKIGVMMPGQSPEVTTGGNALKFYASVRLDIRRIGAIKKGDEIIGNQTKIKVVKNKLAPPFKQVVTEILYGEGISREGELIDMGVEAKLVDKAGAWYSYGDERIGQGKDNARTYLRDNSQVATRLEAELREKFQPAEAPREAGDDEDKE.

Position 65–72 (65–72 (GPESSGKT)) interacts with ATP. A compositionally biased stretch (basic and acidic residues) spans 323-337 (ELREKFQPAEAPREA). Residues 323–344 (ELREKFQPAEAPREAGDDEDKE) are disordered.

Belongs to the RecA family.

The protein resides in the cytoplasm. Functionally, can catalyze the hydrolysis of ATP in the presence of single-stranded DNA, the ATP-dependent uptake of single-stranded DNA by duplex DNA, and the ATP-dependent hybridization of homologous single-stranded DNAs. It interacts with LexA causing its activation and leading to its autocatalytic cleavage. The protein is Protein RecA of Xanthomonas axonopodis pv. citri (strain 306).